The primary structure comprises 95 residues: Protein TusB (95 aa).

It belongs to the DsrH/TusB family. As to quaternary structure, heterohexamer, formed by a dimer of trimers. The hexameric TusBCD complex contains 2 copies each of TusB, TusC and TusD. The TusBCD complex interacts with TusE.

It localises to the cytoplasm. In terms of biological role, part of a sulfur-relay system required for 2-thiolation of 5-methylaminomethyl-2-thiouridine (mnm(5)s(2)U) at tRNA wobble positions. In Photorhabdus laumondii subsp. laumondii (strain DSM 15139 / CIP 105565 / TT01) (Photorhabdus luminescens subsp. laumondii), this protein is Protein TusB.